Consider the following 364-residue polypeptide: Probable tartrate dehydrogenase/decarboxylase TtuC (364 aa).

Residues aspartate 222, aspartate 246, and aspartate 250 each coordinate Mn(2+).

This sequence belongs to the isocitrate and isopropylmalate dehydrogenases family. The cofactor is Mg(2+). Mn(2+) serves as cofactor. It depends on K(+) as a cofactor.

The protein resides in the cytoplasm. It carries out the reaction tartrate + NAD(+) = 2-hydroxy-3-oxosuccinate + NADH + H(+). The catalysed reaction is (2R,3S)-tartrate + NAD(+) = 2-hydroxy-3-oxosuccinate + NADH + H(+). The enzyme catalyses (2R,3R)-tartrate + NAD(+) = 2-hydroxy-3-oxosuccinate + NADH + H(+). It catalyses the reaction (2R,3R)-tartrate + H(+) = (R)-glycerate + CO2. It carries out the reaction (R)-malate + NAD(+) = pyruvate + CO2 + NADH. It participates in carbohydrate acid metabolism; tartrate degradation; 2-hydroxy-3-oxosuccinate from L-tartrate: step 1/1. It functions in the pathway carbohydrate acid metabolism; tartrate degradation; 2-hydroxy-3-oxosuccinate from meso-tartrate: step 1/1. The protein operates within carbohydrate acid metabolism; tartrate degradation; D-glycerate from L-tartrate: step 1/1. Functionally, has multiple catalytic activities. Apart from catalyzing the oxidation of (+)-tartrate to oxaloglycolate, also converts meso-tartrate to D-glycerate and catalyzes the oxidative decarboxylation of D-malate to pyruvate. This is Probable tartrate dehydrogenase/decarboxylase TtuC (ttuC) from Agrobacterium vitis (Rhizobium vitis).